We begin with the raw amino-acid sequence, 100 residues long: Urease subunit gamma (100 aa).

Belongs to the urease gamma subunit family. Heterotrimer of UreA (gamma), UreB (beta) and UreC (alpha) subunits. Three heterotrimers associate to form the active enzyme.

The protein localises to the cytoplasm. The catalysed reaction is urea + 2 H2O + H(+) = hydrogencarbonate + 2 NH4(+). Its pathway is nitrogen metabolism; urea degradation; CO(2) and NH(3) from urea (urease route): step 1/1. This chain is Urease subunit gamma, found in Aliivibrio fischeri (strain ATCC 700601 / ES114) (Vibrio fischeri).